Reading from the N-terminus, the 49-residue chain is Protein OPG059 (49 aa).

A topological domain (virion surface) is located at residue Met1. Residues 2–22 traverse the membrane as a helical segment; that stretch reads VIGLVIFVSVAATIVGVLSNV. Topologically, residues 23 to 49 are intravirion; sequence LDMIMYVEENNEEDAKIKEEQELLLLY.

This sequence belongs to the orthopoxvirus OPG059 family.

It is found in the virion membrane. The protein localises to the host membrane. May play a role in cell adhesion and is important for virus virulence in vivo, although it is not required for the virus life cycle in cell cultures. The polypeptide is Protein OPG059 (OPG059) (Cynomys gunnisoni (Gunnison's prairie dog)).